Here is a 110-residue protein sequence, read N- to C-terminus: Mobility group protein 1B (110 aa).

A DNA-binding region (HMG box) is located at residues 5–71 (PKRPLSAYML…NYIRALQEYE (67 aa)). Over residues 71–81 (ERNGGGGDDKG) the composition is skewed to basic and acidic residues. Residues 71–110 (ERNGGGGDDKGKKRKGAAPKKGAGKKSKKGAHSDDDGDSE) form a disordered region. Basic residues predominate over residues 82-100 (KKRKGAAPKKGAGKKSKKG).

The protein belongs to the HMGB family.

It is found in the nucleus. The protein resides in the chromosome. In terms of biological role, found in condensed chromomeres. Binds preferentially to AT-rich DNA. In Chironomus tentans (Midge), this protein is Mobility group protein 1B (HMG1B).